The chain runs to 120 residues: Large ribosomal subunit protein eL8 (120 aa).

This sequence belongs to the eukaryotic ribosomal protein eL8 family. In terms of assembly, part of the 50S ribosomal subunit. Probably part of the RNase P complex.

Its subcellular location is the cytoplasm. Functionally, multifunctional RNA-binding protein that recognizes the K-turn motif in ribosomal RNA, the RNA component of RNase P, box H/ACA, box C/D and box C'/D' sRNAs. This Methanosarcina mazei (strain ATCC BAA-159 / DSM 3647 / Goe1 / Go1 / JCM 11833 / OCM 88) (Methanosarcina frisia) protein is Large ribosomal subunit protein eL8.